Reading from the N-terminus, the 164-residue chain is UPF0114 protein Sbal_0780 (164 aa).

4 consecutive transmembrane segments (helical) span residues 15–35 (IMAPIYLGLSLILFALGVKFF), 53–73 (LVLLTLSLIDITLVGGLIVMV), 109–129 (VAASIVAISSIHLLKVFMNAE), and 136–156 (IMWYLLIHITFVLSAFAMGYL).

The protein belongs to the UPF0114 family.

The protein localises to the cell membrane. The polypeptide is UPF0114 protein Sbal_0780 (Shewanella baltica (strain OS155 / ATCC BAA-1091)).